We begin with the raw amino-acid sequence, 710 residues long: Early transcription factor 82 kDa subunit (710 aa).

Belongs to the poxviridae VETF large subunit family. Heterodimer of a 70 kDa and a 82 kDa subunit. Part of the early transcription complex composed of ETF, RAP94/OPG109, and the DNA-directed RNA polymerase.

Its subcellular location is the virion. Its function is as follows. Acts with RNA polymerase to initiate transcription from early gene promoters. Is recruited by the RPO-associated protein of 94 kDa RAP94/OPG109 to form the early transcription complex, which also contains the core RNA polymerase. ETF heterodimer binds to early gene promoters. The protein is Early transcription factor 82 kDa subunit (OPG133) of Homo sapiens (Human).